Here is a 572-residue protein sequence, read N- to C-terminus: MPEDSYIPQAKNDGAFQDLKRRRANDGHTEFSRRDRVHDVQPASIYSNVKENKPAWMRSADENKDKKYDQYGSRVDNGTLQQSLGVAKQVPTASASTTTVSAKVESFSAEKAINTANPPPPSTTTTPSSTTSSSSSFPSSSSLYLKYGNIGLGGRGTDPRMDRVKRNREQLEQSLSIREHLAVEENVNDEGSQPKGDGEVNPYLHLDVANPSVIHTQRDEAHYRTFHSKISDRENRDINSIVRQHYNERTQQSKRQGRRTMSPIYKLRNFNNTIKYILLGNWAKYSSAEGNAPKIFSVLDLCCGKGGDLNKCEFIEIDQYIGIDISDLSVREAFSRYSKQKARFKSHSGARTANKYNFEACFATGDCFTETVPDILEPNFPGIIDQAFPVDAVSIQFALHYAFETEEKVRALLVNVAKSLRVGGTFIGTIPSSDFIRSKIVEKNILKDENGKFKFGNSLYSATFDKEPPADGVFRPAFGNRYTYWLKDAVDNVPEYVVPFETLRALCEEYNMTLRYKKNFIDVFNQEIPKYFSKLNKSLVEGLKRSDGKYGAEGEEKEAVAFYVAFVFEKVT.

Disordered regions lie at residues 1–75 and 110–140; these read MPED…GSRV and EKAINTANPPPPSTTTTPSSTTSSSSSFPSS. Basic and acidic residues-rich tracts occupy residues 24–39 and 59–69; these read ANDGHTEFSRRDRVHD and SADENKDKKYD. Residues 123–140 show a composition bias toward low complexity; sequence TTTTPSSTTSSSSSFPSS. The mRNA cap 0 methyltransferase domain occupies 262–571; sequence SPIYKLRNFN…FYVAFVFEKV (310 aa). 271-272 lines the mRNA pocket; that stretch reads NN. S-adenosyl-L-methionine contacts are provided by K275, C302, D324, D366, Q396, and Y401.

Belongs to the class I-like SAM-binding methyltransferase superfamily. mRNA cap 0 methyltransferase family.

The protein localises to the nucleus. It catalyses the reaction a 5'-end (5'-triphosphoguanosine)-ribonucleoside in mRNA + S-adenosyl-L-methionine = a 5'-end (N(7)-methyl 5'-triphosphoguanosine)-ribonucleoside in mRNA + S-adenosyl-L-homocysteine. Its function is as follows. Responsible for methylating the 5'-cap structure of mRNAs. This is mRNA cap guanine-N(7) methyltransferase (ABD1) from Lodderomyces elongisporus (strain ATCC 11503 / CBS 2605 / JCM 1781 / NBRC 1676 / NRRL YB-4239) (Yeast).